We begin with the raw amino-acid sequence, 350 residues long: dTDP-D-glucose 4,6-dehydratase (350 aa).

Thr-142 contacts substrate. The active-site Proton donor is Asp-143. Residues Glu-144 and Tyr-166 each act as proton acceptor in the active site.

It belongs to the NAD(P)-dependent epimerase/dehydratase family. dTDP-glucose dehydratase subfamily. NAD(+) is required as a cofactor.

It catalyses the reaction dTDP-alpha-D-glucose = dTDP-4-dehydro-6-deoxy-alpha-D-glucose + H2O. The sequence is that of dTDP-D-glucose 4,6-dehydratase (TGDS) from Homo sapiens (Human).